Reading from the N-terminus, the 102-residue chain is Small ribosomal subunit protein uS10 (102 aa).

Belongs to the universal ribosomal protein uS10 family. As to quaternary structure, part of the 30S ribosomal subunit.

Its function is as follows. Involved in the binding of tRNA to the ribosomes. In Methanothrix thermoacetophila (strain DSM 6194 / JCM 14653 / NBRC 101360 / PT) (Methanosaeta thermophila), this protein is Small ribosomal subunit protein uS10.